A 974-amino-acid polypeptide reads, in one-letter code: MSVSMRDLDPAFQGAGQKAGIEIWRIENFIPTPIPKSSIGKFFTGDSYIVLKTTALKTGALRHDIHYWLGKDTSQDEAGTAAVKTVELDAALGGRAVQYREVQGHETEKFLSYFKPCIIPQEGGVASGFKHVVAEEHITRLFVCRGKHVVHVKEVPFARSSLNHDDIYILDTKSKIFQFNGSNSSIQERAKALEVVQYIKDTYHDGTCEVATVEDGKLMADADSGEFWGFFGGFAPLPRKTANDEDKTYNSDITRLFCVEKGQANPVEGDTLKREMLDTNKCYILDCGIEVFVWMGRTTSLDDRKIASKAAEEMIRSSERPKSQMIRIIEGFETVPFRSKFESWTQETNTTVSEDGRGRVAALLQRQGVNVRGLMKAAPPKEEPQVFIDCTGNLQVWRVNGQAKTLLQAADHSKFYSGDCYVFQYSYPGEEKEEVLIGTWFGKQSVEEERGSAVSMASKMVESMKFVPAQARIYEGKEPIQFFVIMQSFIVFKGGISSGYKKYIAEKEVDDDTYNENGVALFRIQGSGPENMQAIQVDPVAASLNSSYYYILHNDSSVFTWAGNLSTATDQELAERQLDLIKPNQQSRAQKEGSESEQFWELLGGKAEYSSQKLTKEPERDPHLFSCTFTKEVLKVTEIYNFTQDDLMTEDIFIIDCHSEIFVWVGQEVVPKNKLLALTIGEKFIEKDSLLEKLSPEAPIYVIMEGGEPSFFTRFFTSWDSSKSAMHGNSFQRKLKIVKNGGTPVADKPKRRTPASYGGRASVPDKSQQRSRSMSFSPDRVRVRGRSPAFNALAATFESQNARNLSTPPPVVRKLYPRSVTPDSSKFAPAPKSSAIASRSALFEKIPPQEPSIPKPVKASPKTPESPAPESNSKEQEEKKENDKEEGSMSSRIESLTIQEDAKEGVEDEEDLPAHPYDRLKTTSTDPVSDIDVTRREAYLSSEEFKEKFGMTKEAFYKLPKWKQNKFKMAVQLF.

Gelsolin-like repeat units follow at residues 29–79 (FIPT…DEAG), 150–190 (VHVK…QERA), 262–305 (GQAN…DDRK), 394–451 (LQVW…EERG), 532–572 (MQAI…TDQE), and 634–675 (LKVT…KNKL). The interval 738–783 (VKNGGTPVADKPKRRTPASYGGRASVPDKSQQRSRSMSFSPDRVRV) is disordered. Phosphoserine is present on residues S777 and S787. Disordered regions lie at residues 801–833 (NARN…APKS) and 845–930 (KIPP…PVSD). Low complexity predominate over residues 824-833 (SSKFAPAPKS). The segment covering 872–887 (NSKEQEEKKENDKEEG) has biased composition (basic and acidic residues). Polar residues predominate over residues 888 to 898 (SMSSRIESLTI). Position 890 is a phosphoserine (S890). In terms of domain architecture, HP spans 909–974 (EEDLPAHPYD…NKFKMAVQLF (66 aa)). Over residues 912 to 921 (LPAHPYDRLK) the composition is skewed to basic and acidic residues.

It belongs to the villin/gelsolin family. Preferentially expressed in vegetative tissues. Detected in the whole seedling, hypocotyl, cotyledon, primary root, roots hair cells and trichomes. Expressed in flowers but not in the silique.

It is found in the cytoplasm. The protein resides in the cytoskeleton. In terms of biological role, binds actin and actin filament bundles in a Ca(2+)-insensitive manner, but caps the barbed end of actin filaments and is able to sever them in a calcium-dependent manner. Involved in root hair growth through regulating actin organization in a Ca(2+)-dependent manner. This Arabidopsis thaliana (Mouse-ear cress) protein is Villin-4.